Reading from the N-terminus, the 22-residue chain is Oxygen-evolving enhancer protein 2 (22 aa).

The protein belongs to the PsbP family.

It is found in the plastid. The protein localises to the chloroplast thylakoid membrane. In terms of biological role, may be involved in the regulation of photosystem II. This is Oxygen-evolving enhancer protein 2 from Physcomitrium patens (Spreading-leaved earth moss).